Here is a 537-residue protein sequence, read N- to C-terminus: Exodeoxyribonuclease 7 large subunit (537 aa).

The interval 508–537 (GEGAPVEPPQAARPSKGARTKAAQPSLFDD) is disordered.

The protein belongs to the XseA family. As to quaternary structure, heterooligomer composed of large and small subunits.

It localises to the cytoplasm. The enzyme catalyses Exonucleolytic cleavage in either 5'- to 3'- or 3'- to 5'-direction to yield nucleoside 5'-phosphates.. Bidirectionally degrades single-stranded DNA into large acid-insoluble oligonucleotides, which are then degraded further into small acid-soluble oligonucleotides. This Azorhizobium caulinodans (strain ATCC 43989 / DSM 5975 / JCM 20966 / LMG 6465 / NBRC 14845 / NCIMB 13405 / ORS 571) protein is Exodeoxyribonuclease 7 large subunit.